We begin with the raw amino-acid sequence, 271 residues long: Putative phosphoenolpyruvate synthase regulatory protein (271 aa).

ADP is bound at residue 151–158 (GVSRSGKT).

This sequence belongs to the pyruvate, phosphate/water dikinase regulatory protein family. PSRP subfamily.

It carries out the reaction [pyruvate, water dikinase] + ADP = [pyruvate, water dikinase]-phosphate + AMP + H(+). The enzyme catalyses [pyruvate, water dikinase]-phosphate + phosphate + H(+) = [pyruvate, water dikinase] + diphosphate. Functionally, bifunctional serine/threonine kinase and phosphorylase involved in the regulation of the phosphoenolpyruvate synthase (PEPS) by catalyzing its phosphorylation/dephosphorylation. In Burkholderia thailandensis (strain ATCC 700388 / DSM 13276 / CCUG 48851 / CIP 106301 / E264), this protein is Putative phosphoenolpyruvate synthase regulatory protein.